The chain runs to 214 residues: Uridine kinase (214 aa).

11 to 18 serves as a coordination point for ATP; the sequence is GGSGSGKT.

Belongs to the uridine kinase family.

The protein resides in the cytoplasm. The catalysed reaction is uridine + ATP = UMP + ADP + H(+). It carries out the reaction cytidine + ATP = CMP + ADP + H(+). It functions in the pathway pyrimidine metabolism; CTP biosynthesis via salvage pathway; CTP from cytidine: step 1/3. Its pathway is pyrimidine metabolism; UMP biosynthesis via salvage pathway; UMP from uridine: step 1/1. The protein is Uridine kinase of Brevibacillus brevis (strain 47 / JCM 6285 / NBRC 100599).